We begin with the raw amino-acid sequence, 261 residues long: tRNA(His) guanylyltransferase (261 aa).

3 residues coordinate Mg(2+): Asp-29, Gly-30, and Asp-76. GTP is bound by residues 29 to 34 and 75 to 76; these read DGKGFH and SD.

Belongs to the tRNA(His) guanylyltransferase family. Requires Mg(2+) as cofactor.

It carries out the reaction a 5'-end ribonucleotide-tRNA(His) + GTP + ATP + H2O = a 5'-end phospho-guanosine-ribonucleotide-tRNA(His) + AMP + 2 diphosphate + H(+). Its function is as follows. Adds a GMP to the 5'-end of tRNA(His) after transcription and RNase P cleavage. The chain is tRNA(His) guanylyltransferase (thg1) from Schizosaccharomyces pombe (strain 972 / ATCC 24843) (Fission yeast).